A 147-amino-acid chain; its full sequence is Transcriptional repressor NrdR (147 aa).

Residues 3-34 (CLFCRSDDTKVIDSRTSEDGISIRRRRECQLC) fold into a zinc finger. The ATP-cone domain occupies 46–136 (LTVIKRNGTS…VYQDFDSLED (91 aa)).

Belongs to the NrdR family. It depends on Zn(2+) as a cofactor.

Functionally, negatively regulates transcription of bacterial ribonucleotide reductase nrd genes and operons by binding to NrdR-boxes. This Tropheryma whipplei (strain TW08/27) (Whipple's bacillus) protein is Transcriptional repressor NrdR.